Reading from the N-terminus, the 480-residue chain is Adenosylhomocysteinase (480 aa).

Positions 63, 142, and 203 each coordinate substrate. Thr-204 to Thr-206 lines the NAD(+) pocket. Substrate is bound by residues Lys-233 and Asp-237. NAD(+)-binding positions include Asn-238, Gly-267–Gly-272, Glu-290, Asn-325, Ile-346–His-348, and Asn-394.

The protein belongs to the adenosylhomocysteinase family. The cofactor is NAD(+).

The protein resides in the cytoplasm. It carries out the reaction S-adenosyl-L-homocysteine + H2O = L-homocysteine + adenosine. It functions in the pathway amino-acid biosynthesis; L-homocysteine biosynthesis; L-homocysteine from S-adenosyl-L-homocysteine: step 1/1. Its function is as follows. May play a key role in the regulation of the intracellular concentration of adenosylhomocysteine. This Xylella fastidiosa (strain Temecula1 / ATCC 700964) protein is Adenosylhomocysteinase.